Here is a 938-residue protein sequence, read N- to C-terminus: Isoleucine--tRNA ligase (938 aa).

Positions 58 to 68 (PYANGSIHIGH) match the 'HIGH' region motif. Lys-183 is modified (N6-acetyllysine). Residue Glu-561 participates in L-isoleucyl-5'-AMP binding. Residues 602 to 606 (KMSKS) carry the 'KMSKS' region motif. An ATP-binding site is contributed by Lys-605. Residues Cys-901, Cys-904, Cys-921, and Cys-924 each coordinate Zn(2+).

The protein belongs to the class-I aminoacyl-tRNA synthetase family. IleS type 1 subfamily. As to quaternary structure, monomer. The cofactor is Zn(2+).

The protein resides in the cytoplasm. The enzyme catalyses tRNA(Ile) + L-isoleucine + ATP = L-isoleucyl-tRNA(Ile) + AMP + diphosphate. Its function is as follows. Catalyzes the attachment of isoleucine to tRNA(Ile). As IleRS can inadvertently accommodate and process structurally similar amino acids such as valine, to avoid such errors it has two additional distinct tRNA(Ile)-dependent editing activities. One activity is designated as 'pretransfer' editing and involves the hydrolysis of activated Val-AMP. The other activity is designated 'posttransfer' editing and involves deacylation of mischarged Val-tRNA(Ile). The polypeptide is Isoleucine--tRNA ligase (Escherichia coli O127:H6 (strain E2348/69 / EPEC)).